Here is a 337-residue protein sequence, read N- to C-terminus: Holliday junction branch migration complex subunit RuvB (337 aa).

The tract at residues 1 to 181 (MQRLVEIERF…FGMNFRMQFY (181 aa)) is large ATPase domain (RuvB-L). Residues leucine 20, arginine 21, glycine 62, lysine 65, threonine 66, threonine 67, 128–130 (EDF), arginine 171, tyrosine 181, and arginine 218 contribute to the ATP site. A Mg(2+)-binding site is contributed by threonine 66. Residues 182-252 (SPEELSKIIS…RAQYALDELG (71 aa)) form a small ATPAse domain (RuvB-S) region. The tract at residues 255–337 (SYGFDEMDIK…MPALDDGGLF (83 aa)) is head domain (RuvB-H). DNA is bound by residues arginine 309 and arginine 314.

It belongs to the RuvB family. As to quaternary structure, homohexamer. Forms an RuvA(8)-RuvB(12)-Holliday junction (HJ) complex. HJ DNA is sandwiched between 2 RuvA tetramers; dsDNA enters through RuvA and exits via RuvB. An RuvB hexamer assembles on each DNA strand where it exits the tetramer. Each RuvB hexamer is contacted by two RuvA subunits (via domain III) on 2 adjacent RuvB subunits; this complex drives branch migration. In the full resolvosome a probable DNA-RuvA(4)-RuvB(12)-RuvC(2) complex forms which resolves the HJ.

The protein resides in the cytoplasm. It carries out the reaction ATP + H2O = ADP + phosphate + H(+). Its function is as follows. The RuvA-RuvB-RuvC complex processes Holliday junction (HJ) DNA during genetic recombination and DNA repair, while the RuvA-RuvB complex plays an important role in the rescue of blocked DNA replication forks via replication fork reversal (RFR). RuvA specifically binds to HJ cruciform DNA, conferring on it an open structure. The RuvB hexamer acts as an ATP-dependent pump, pulling dsDNA into and through the RuvAB complex. RuvB forms 2 homohexamers on either side of HJ DNA bound by 1 or 2 RuvA tetramers; 4 subunits per hexamer contact DNA at a time. Coordinated motions by a converter formed by DNA-disengaged RuvB subunits stimulates ATP hydrolysis and nucleotide exchange. Immobilization of the converter enables RuvB to convert the ATP-contained energy into a lever motion, pulling 2 nucleotides of DNA out of the RuvA tetramer per ATP hydrolyzed, thus driving DNA branch migration. The RuvB motors rotate together with the DNA substrate, which together with the progressing nucleotide cycle form the mechanistic basis for DNA recombination by continuous HJ branch migration. Branch migration allows RuvC to scan DNA until it finds its consensus sequence, where it cleaves and resolves cruciform DNA. The chain is Holliday junction branch migration complex subunit RuvB from Sulfurimonas denitrificans (strain ATCC 33889 / DSM 1251) (Thiomicrospira denitrificans (strain ATCC 33889 / DSM 1251)).